Reading from the N-terminus, the 327-residue chain is F-box/LRR-repeat protein At3g58900 (327 aa).

Residues 1 to 47 enclose the F-box domain; sequence MDLFSSLPNELLYHILSFLSTKEAALTSVLSKRWRNLFAFVPYLEFD. LRR repeat units follow at residues 116–144, 161–192, 199–230, 235–261, and 277–308; these read DLFIDFRDLYSLPHEVGVSRTLVVLRVGS, KTLVLDSCWLCIGQFQILLLACPALEELDMTN, NVTVSSSILKELTIDLHGCCSVVNLKSLSFDA, YFYYCDSLAEDYPQVNLKNLVEAQINL, and EMLVADDVFPGLGNAWKLITGLRNVQQLYLSP.

In Arabidopsis thaliana (Mouse-ear cress), this protein is F-box/LRR-repeat protein At3g58900.